The sequence spans 426 residues: UDP-N-acetylglucosamine--N-acetylmuramyl-(pentapeptide) pyrophosphoryl-undecaprenol N-acetylglucosamine transferase (426 aa).

UDP-N-acetyl-alpha-D-glucosamine-binding positions include 28-30 (TGG), N140, R176, S204, I257, and Q302. Residues 369 to 388 (AGNGPSGMGNGHSSEQPQER) are disordered.

It belongs to the glycosyltransferase 28 family. MurG subfamily.

It is found in the cell inner membrane. It catalyses the reaction di-trans,octa-cis-undecaprenyl diphospho-N-acetyl-alpha-D-muramoyl-L-alanyl-D-glutamyl-meso-2,6-diaminopimeloyl-D-alanyl-D-alanine + UDP-N-acetyl-alpha-D-glucosamine = di-trans,octa-cis-undecaprenyl diphospho-[N-acetyl-alpha-D-glucosaminyl-(1-&gt;4)]-N-acetyl-alpha-D-muramoyl-L-alanyl-D-glutamyl-meso-2,6-diaminopimeloyl-D-alanyl-D-alanine + UDP + H(+). It participates in cell wall biogenesis; peptidoglycan biosynthesis. Functionally, cell wall formation. Catalyzes the transfer of a GlcNAc subunit on undecaprenyl-pyrophosphoryl-MurNAc-pentapeptide (lipid intermediate I) to form undecaprenyl-pyrophosphoryl-MurNAc-(pentapeptide)GlcNAc (lipid intermediate II). The sequence is that of UDP-N-acetylglucosamine--N-acetylmuramyl-(pentapeptide) pyrophosphoryl-undecaprenol N-acetylglucosamine transferase from Xanthomonas axonopodis pv. citri (strain 306).